Here is a 62-residue protein sequence, read N- to C-terminus: SPbeta prophage-derived uncharacterized protein YonU (62 aa).

Residues 1-32 (MEKKFLDAIQQLTKELEMLKKDIDSIKEATVR) adopt a coiled-coil conformation.

The sequence is that of SPbeta prophage-derived uncharacterized protein YonU (yonU) from Bacillus subtilis (strain 168).